The chain runs to 351 residues: Protein-glutamate methylesterase/protein-glutamine glutaminase 1 (351 aa).

A Response regulatory domain is found at 1–115 (MVDDSAVVRQ…KQFLTESADE (115 aa)). A 4-aspartylphosphate modification is found at aspartate 49. One can recognise a CheB-type methylesterase domain in the interval 161 to 351 (AQTTERIVAI…MAREIVTQLQ (191 aa)). Residues serine 173, histidine 199, and aspartate 295 contribute to the active site.

The protein belongs to the CheB family. Phosphorylated by CheA. Phosphorylation of the N-terminal regulatory domain activates the methylesterase activity.

Its subcellular location is the cytoplasm. It carries out the reaction [protein]-L-glutamate 5-O-methyl ester + H2O = L-glutamyl-[protein] + methanol + H(+). The catalysed reaction is L-glutaminyl-[protein] + H2O = L-glutamyl-[protein] + NH4(+). In terms of biological role, involved in chemotaxis. Part of a chemotaxis signal transduction system that modulates chemotaxis in response to various stimuli. Catalyzes the demethylation of specific methylglutamate residues introduced into the chemoreceptors (methyl-accepting chemotaxis proteins or MCP) by CheR. Also mediates the irreversible deamidation of specific glutamine residues to glutamic acid. In Xanthomonas oryzae pv. oryzae (strain MAFF 311018), this protein is Protein-glutamate methylesterase/protein-glutamine glutaminase 1.